The sequence spans 515 residues: Membrane-bound lytic murein transglycosylase F (515 aa).

The signal sequence occupies residues 1 to 32 (MKKLKINYLFIGILTLLLAAALWPSIPWFGKA). The segment at 33–269 (DNRIAAIQSR…RMEEKYLGHG (237 aa)) is non-LT domain. The segment at 270–515 (DDFDYVDTRT…PFSLKKKDEN (246 aa)) is LT domain. Residue E314 is part of the active site. The segment at 493 to 515 (QPSSNYLSHSPSLPFSLKKKDEN) is disordered.

It in the N-terminal section; belongs to the bacterial solute-binding protein 3 family. The protein in the C-terminal section; belongs to the transglycosylase Slt family.

It is found in the cell outer membrane. The enzyme catalyses Exolytic cleavage of the (1-&gt;4)-beta-glycosidic linkage between N-acetylmuramic acid (MurNAc) and N-acetylglucosamine (GlcNAc) residues in peptidoglycan, from either the reducing or the non-reducing ends of the peptidoglycan chains, with concomitant formation of a 1,6-anhydrobond in the MurNAc residue.. Functionally, murein-degrading enzyme that degrades murein glycan strands and insoluble, high-molecular weight murein sacculi, with the concomitant formation of a 1,6-anhydromuramoyl product. Lytic transglycosylases (LTs) play an integral role in the metabolism of the peptidoglycan (PG) sacculus. Their lytic action creates space within the PG sacculus to allow for its expansion as well as for the insertion of various structures such as secretion systems and flagella. In Citrobacter koseri (strain ATCC BAA-895 / CDC 4225-83 / SGSC4696), this protein is Membrane-bound lytic murein transglycosylase F.